The following is a 461-amino-acid chain: Glutamate-gated chloride channel alpha (461 aa).

Positions 1–20 are cleaved as a signal peptide; it reads MATWIVGKLIIASLILGIQA. At 21–275 the chain is on the extracellular side; sequence QQARTKSQDI…TTIQLKREFS (255 aa). Residues arginine 98, arginine 117, and serine 182 each contribute to the L-glutamate site. A disulfide bridge connects residues cysteine 191 and cysteine 205. Residue serine 211 coordinates L-glutamate. Residue asparagine 246 is glycosylated (N-linked (GlcNAc...) asparagine). Cysteine 252 and cysteine 263 form a disulfide bridge. A helical membrane pass occupies residues 276–298; it reads FYLLQLYIPSCMLVIVSWVSFWF. Over 299–303 the chain is Cytoplasmic; the sequence is DRTAI. Residues 304-325 traverse the membrane as a helical segment; the sequence is PARVTLGVTTLLTMTAQSAGIN. Residues 326 to 332 are Extracellular-facing; that stretch reads SQLPPVS. Residues 333-353 traverse the membrane as a helical segment; sequence YIKAIDVWIGACMTFIFCALL. The Cytoplasmic segment spans residues 354–432; that stretch reads EFALVNHIAN…EWNDISKRVD (79 aa). The chain crosses the membrane as a helical span at residues 433–454; that stretch reads LISRALFPVLFFVFNILYWSRF. Topologically, residues 455–461 are extracellular; that stretch reads GQQNVLF.

It belongs to the ligand-gated ion channel (TC 1.A.9) family. Glutamate-gated chloride channel (TC 1.A.9.4) subfamily. As to quaternary structure, pentamer. Homooligomer, forms functional heterooligomers with glc-2.

It is found in the postsynaptic cell membrane. It localises to the cell membrane. Its function is as follows. Glutamate-gated chloride channel subunit; channel properties depend on the subunit composition. Glutamate binding triggers a rapidly reversible current in heteromeric channels formed by glc-1 and glc-2, while the anti-helmintic drug ivermectin and other avermectins trigger a permanently open channel configuration. Channels containing only glc-1 are activated by ivermectin, but not by glutamate alone (in vitro). The heteromeric channel formed by glc-1 and glc-2 is also activated by ibotenate, and it is blocked by picrotoxin and flufenamic acid. Plays a role in the regulation of locomotor behavior. The protein is Glutamate-gated chloride channel alpha of Caenorhabditis elegans.